We begin with the raw amino-acid sequence, 104 residues long: Pyrimidine/purine nucleoside phosphorylase (104 aa).

The protein belongs to the nucleoside phosphorylase PpnP family.

The catalysed reaction is a purine D-ribonucleoside + phosphate = a purine nucleobase + alpha-D-ribose 1-phosphate. It carries out the reaction adenosine + phosphate = alpha-D-ribose 1-phosphate + adenine. It catalyses the reaction cytidine + phosphate = cytosine + alpha-D-ribose 1-phosphate. The enzyme catalyses guanosine + phosphate = alpha-D-ribose 1-phosphate + guanine. The catalysed reaction is inosine + phosphate = alpha-D-ribose 1-phosphate + hypoxanthine. It carries out the reaction thymidine + phosphate = 2-deoxy-alpha-D-ribose 1-phosphate + thymine. It catalyses the reaction uridine + phosphate = alpha-D-ribose 1-phosphate + uracil. The enzyme catalyses xanthosine + phosphate = alpha-D-ribose 1-phosphate + xanthine. In terms of biological role, catalyzes the phosphorolysis of diverse nucleosides, yielding D-ribose 1-phosphate and the respective free bases. Can use uridine, adenosine, guanosine, cytidine, thymidine, inosine and xanthosine as substrates. Also catalyzes the reverse reactions. The polypeptide is Pyrimidine/purine nucleoside phosphorylase (Janthinobacterium sp. (strain Marseille) (Minibacterium massiliensis)).